A 370-amino-acid polypeptide reads, in one-letter code: Peptidyl-prolyl cis-trans isomerase D (370 aa).

S5 bears the Phosphoserine mark. Positions 19–183 (FFDVDIGGER…KLCVIAECGE (165 aa)) constitute a PPIase cyclophilin-type domain. K171 carries the post-translational modification N6-acetyllysine. The segment at 185 to 215 (KEGDDWGIFPKDGSGDSHPDFPEDADVDLKD) is chaperone activity. S198 carries the phosphoserine modification. An interaction with HSP90AB1 region spans residues 214-370 (KDVDKILLIS…EKAAYAKMFA (157 aa)). 3 TPR repeats span residues 223–256 (SEDLKNIGNTFFKSQNWEMAIKKYTKVLRYVEGS), 273–306 (LSCVLNIGACKLKMSDWQGAVDSCLEALEIDPSN), and 307–340 (TKALYRRAQGWQGLKEYDQALADLKKAQEIAPED).

The protein belongs to the cyclophilin-type PPIase family. PPIase D subfamily. In terms of assembly, identified in ESR1 or NR3C1/GCR steroid receptor-chaperone complexes. Found in HSP90 chaperone complexes with kinase clients LCK or EIF2AK1. Two monomers associate with one HSP90 homodimer. Interacts with HSP90AA1. Interacts with HSP90AB1; PPID and FKBP4 compete for binding to HSP90AB1 and the interaction is mutually exclusive with the PPID:HSPA8 interaction. Interacts with HSPA8; PPID and STIP1 but not FKBP4 compete for binding to HSPA8 and the interaction is mutually exclusive with the PPID:HSP90AB1 interaction. Interacts with S100A1 and S100A2; the interactions dissociate the PPID:HSP90AA1 interaction. Interacts with S100A6. Interacts with MYB, ILF2, XRCC6, RACK1 and RPS3. Interacts with cytoplasmic dynein 1 intermediate chain (DYNC1I1 or DYNC1I2). In terms of processing, the N-terminus is blocked. Detected in heart, thymis and brain.

Its subcellular location is the cytoplasm. The protein localises to the nucleus. The protein resides in the nucleolus. It is found in the nucleoplasm. It catalyses the reaction [protein]-peptidylproline (omega=180) = [protein]-peptidylproline (omega=0). Its activity is regulated as follows. Less sensitive to inhibition by cyclosporin A than is CYP-18. Its function is as follows. PPIase that catalyzes the cis-trans isomerization of proline imidic peptide bonds in oligopeptides and may therefore assist protein folding. Proposed to act as a co-chaperone in HSP90 complexes such as in unligated steroid receptors heterocomplexes. Different co-chaperones seem to compete for association with HSP90 thus establishing distinct HSP90-co-chaperone-receptor complexes with the potential to exert tissue-specific receptor activity control. May have a preference for estrogen receptor complexes and is not found in glucocorticoid receptor complexes. May be involved in cytoplasmic dynein-dependent movement of the receptor from the cytoplasm to the nucleus. May regulate MYB by inhibiting its DNA-binding activity. Involved in regulation of AHR signaling by promoting the formation of the AHR:ARNT dimer; the function is independent of HSP90 but requires the chaperone activity. Involved in regulation of UV radiation-induced apoptosis. The polypeptide is Peptidyl-prolyl cis-trans isomerase D (Bos taurus (Bovine)).